The following is a 172-amino-acid chain: Adenylate kinase isoenzyme 6 (172 aa).

ATP contacts are provided by G13, G15, K16, T17, and T18. Residues 33-56 form an NMPbind region; the sequence is NVGDLAREGELYDGFDEEYNCPIL. The tract at residues 108–118 is LID; that stretch reads TRGYSEKKLND. ATP is bound by residues R109 and K148.

Belongs to the adenylate kinase family. AK6 subfamily. Monomer and homodimer. Interacts with small ribosomal subunit protein uS11. Not a structural component of 43S pre-ribosomes, but transiently interacts with them by binding to uS11. Interacts with COIL (via C-terminus).

It localises to the cytoplasm. The protein resides in the nucleus. It is found in the nucleoplasm. Its subcellular location is the cajal body. The enzyme catalyses AMP + ATP = 2 ADP. The catalysed reaction is ATP + H2O = ADP + phosphate + H(+). Its function is as follows. Broad-specificity nucleoside monophosphate (NMP) kinase that catalyzes the reversible transfer of the terminal phosphate group between nucleoside triphosphates and monophosphates. Also has ATPase activity. Involved in the late cytoplasmic maturation steps of the 40S ribosomal particles, specifically 18S rRNA maturation. While NMP activity is not required for ribosome maturation, ATPase activity is. Associates transiently with small ribosomal subunit protein uS11. ATP hydrolysis breaks the interaction with uS11. May temporarily remove uS11 from the ribosome to enable a conformational change of the ribosomal RNA that is needed for the final maturation step of the small ribosomal subunit. Its NMP activity may have a role in nuclear energy homeostasis. May be involved in regulation of Cajal body (CB) formation. This chain is Adenylate kinase isoenzyme 6, found in Oryctolagus cuniculus (Rabbit).